The sequence spans 89 residues: Large ribosomal subunit protein bL27 (89 aa).

The segment at 1-24 (MAHKKGTGSTRNGRDSNSKRLGVK) is disordered.

The protein belongs to the bacterial ribosomal protein bL27 family.

The chain is Large ribosomal subunit protein bL27 from Synechococcus sp. (strain WH7803).